Here is a 66-residue protein sequence, read N- to C-terminus: Truncated interferon antagonist OPG039 (66 aa).

Residues 29–58 form an ANK repeat; that stretch reads HGHSALYYAIADNNMRLVCTLLNAGALKNL.

This sequence belongs to the orthopoxvirus OPG039 family.

The sequence is that of Truncated interferon antagonist OPG039 (OPG040) from Homo sapiens (Human).